Consider the following 189-residue polypeptide: Cancer/testis antigen family 45 member A5 (189 aa).

Basic and acidic residues predominate over residues 1–23; it reads MTDKTEKVAVDPETVFKRPRECD. Disordered stretches follow at residues 1 to 27 and 82 to 118; these read MTDK…SPSY and DGMM…SPKS.

The protein belongs to the CT45 family. Testis specific. Expressed in cancer cell lines.

It localises to the nucleus. The polypeptide is Cancer/testis antigen family 45 member A5 (Homo sapiens (Human)).